A 92-amino-acid chain; its full sequence is Bombyxin A-7 (92 aa).

A signal peptide spans 1 to 19 (MKLLLAIALMLTIVMWVST). Glutamine 20 is modified (pyrrolidone carboxylic acid). 3 disulfides stabilise this stretch: cysteine 29–cysteine 79, cysteine 41–cysteine 92, and cysteine 78–cysteine 83. The propeptide at 50–70 (SDAQYASYGSAWLMPYSEGRG) is c peptide like.

The protein belongs to the insulin family. As to quaternary structure, heterodimer of a B chain and an A chain linked by two disulfide bonds.

The protein localises to the secreted. Functionally, brain peptide responsible for activation of prothoracic glands to produce ecdysone in insects. The chain is Bombyxin A-7 (BBXA7) from Bombyx mori (Silk moth).